The sequence spans 89 residues: Pyrin domain-containing protein 1 (89 aa).

Residues 1–89 (MGTKREAILK…EEAARLQRAA (89 aa)) enclose the Pyrin domain.

As to quaternary structure, interacts with PYCARD/ASC (via pyrin domain). Phosphorylated. In terms of tissue distribution, predominantly expressed in monocytes, macrophages and granulocytes.

Its subcellular location is the cytoplasm. Associates with PYCARD/ASC and modulates its ability to collaborate with MEFV/pyrin and NLRP3/cryopyrin in NF-kappa-B and pro-caspase-1 activation. Suppresses kinase activity of NF-kappa-B inhibitor kinase (IKK) complex, expression of NF-kappa-B inducible genes and inhibits NF-kappa-B activation by cytokines and LPS. In Homo sapiens (Human), this protein is Pyrin domain-containing protein 1.